A 540-amino-acid polypeptide reads, in one-letter code: MADSSGSNPQSPGFTEKLKSWLCWSWTYICALWFAMVLTMVYVLRSPLKLQETVNAASVFLNTLTPKFYVALTGTSSLISGLILIFEWWYFRKYGTSFIEQVSVSHLRPLLGGVENSGSAGLFSSVNGDAEPRSNVAECKVWRNPLNLFRGAEYSRYTWVTGKEPLTYYDMNLSAQDHQTFFLGDTQQLRPEDSVMQKAWRERNPQARIRAAYQAIELNRECAAAYVLLAEEEATTITEAERLFKQALKSAGKDTNLVVYIKRRLAMCARKLGRIKEAVKMMRDLMKEFPLLGMLNIHENLLEALLELQAYADVQAVLAKYDDISLPKSATICYTSALLKARAVSDKFSPEAASRRGLSTAEMNAVEAIHRAVEFNPHVPKYLLEMKSLILPPEHILKRGDSEAVAYAFFHLQHWKRAEGALNLLHCTWEGTFRIIPYPLEKGHLFYPYPGCTETADRELLPSFHEVSVYPKKELPFFILFTAGLCSFCAMLAMLTHQFPELMGVFVKAFFSTLFAPLGFFADKMESFMPSCLWHQLTNV.

A run of 4 helical transmembrane segments spans residues 24–44 (WSWTYICALWFAMVLTMVYVL), 68–88 (FYVALTGTSSLISGLILIFEW), 475–495 (LPFFILFTAGLCSFCAMLAML), and 502–522 (LMGVFVKAFFSTLFAPLGFFA).

Belongs to the ST7 family.

It is found in the membrane. This Danio rerio (Zebrafish) protein is Suppressor of tumorigenicity 7 protein-like (st7l).